The sequence spans 513 residues: ATP synthase subunit alpha (513 aa).

169-176 (GDRQTGKT) serves as a coordination point for ATP.

This sequence belongs to the ATPase alpha/beta chains family. As to quaternary structure, F-type ATPases have 2 components, CF(1) - the catalytic core - and CF(0) - the membrane proton channel. CF(1) has five subunits: alpha(3), beta(3), gamma(1), delta(1), epsilon(1). CF(0) has three main subunits: a(1), b(2) and c(9-12). The alpha and beta chains form an alternating ring which encloses part of the gamma chain. CF(1) is attached to CF(0) by a central stalk formed by the gamma and epsilon chains, while a peripheral stalk is formed by the delta and b chains.

The protein resides in the cell inner membrane. The enzyme catalyses ATP + H2O + 4 H(+)(in) = ADP + phosphate + 5 H(+)(out). Its function is as follows. Produces ATP from ADP in the presence of a proton gradient across the membrane. The alpha chain is a regulatory subunit. In Citrobacter koseri (strain ATCC BAA-895 / CDC 4225-83 / SGSC4696), this protein is ATP synthase subunit alpha.